The sequence spans 121 residues: Protein AC4 (121 aa).

Residues 11-30 (RGQSSNPHTSESQERNIQTG) are disordered. Polar residues predominate over residues 12–30 (GQSSNPHTSESQERNIQTG).

It belongs to the geminiviridae protein AC4/C4 family.

Pathogenicity determinant. May act as a suppressor of RNA-mediated gene silencing, also known as post-transcriptional gene silencing (PTGS), a mechanism of plant viral defense that limits the accumulation of viral RNAs. The polypeptide is Protein AC4 (Cabbage leaf curl virus (isolate Jamaica) (CaLCuV)).